The primary structure comprises 96 residues: MAKYEILYIIRPNIEEEAKNALVARFDSILTDNGATVVESKDWEKRRLAYEIQDFREGLYHIVNVEANDDAALKEFDRLSKINADILRHMIVKLDA.

It belongs to the bacterial ribosomal protein bS6 family.

In terms of biological role, binds together with bS18 to 16S ribosomal RNA. In Streptococcus sanguinis (strain SK36), this protein is Small ribosomal subunit protein bS6.